Here is a 466-residue protein sequence, read N- to C-terminus: Asparagine--tRNA ligase (466 aa).

Belongs to the class-II aminoacyl-tRNA synthetase family. As to quaternary structure, homodimer.

The protein resides in the cytoplasm. The enzyme catalyses tRNA(Asn) + L-asparagine + ATP = L-asparaginyl-tRNA(Asn) + AMP + diphosphate + H(+). The sequence is that of Asparagine--tRNA ligase from Colwellia psychrerythraea (strain 34H / ATCC BAA-681) (Vibrio psychroerythus).